Here is a 543-residue protein sequence, read N- to C-terminus: T-complex protein 1 subunit gamma (543 aa).

This sequence belongs to the TCP-1 chaperonin family.

The protein localises to the cytoplasm. Functionally, molecular chaperone; assists the folding of proteins upon ATP hydrolysis. Known to play a role, in vitro, in the folding of actin and tubulin. Plays a role in microtubule polymerization. The protein is T-complex protein 1 subunit gamma of Caenorhabditis elegans.